The sequence spans 213 residues: ATP synthase peripheral stalk subunit OSCP, mitochondrial (213 aa).

The transit peptide at 1–23 (MAAPAVSGVSQQVRYFGTSVVRP) directs the protein to the mitochondrion. The SIFI-degron signature appears at 5–23 (AVSGVSQQVRYFGTSVVRP). K54, K60, K70, and K73 each carry N6-acetyllysine. K90 carries the post-translational modification N6-succinyllysine. N6-acetyllysine; alternate occurs at positions 158 and 162. Residues K158 and K162 each carry the N6-succinyllysine; alternate modification. K172, K176, and K192 each carry N6-acetyllysine. The residue at position 199 (K199) is an N6-succinyllysine.

It belongs to the ATPase delta chain family. As to quaternary structure, component of the ATP synthase complex composed at least of ATP5F1A/subunit alpha, ATP5F1B/subunit beta, ATP5MC1/subunit c (homooctomer), MT-ATP6/subunit a, MT-ATP8/subunit 8, ATP5ME/subunit e, ATP5MF/subunit f, ATP5MG/subunit g, ATP5MK/subunit k, ATP5MJ/subunit j, ATP5F1C/subunit gamma, ATP5F1D/subunit delta, ATP5F1E/subunit epsilon, ATP5PF/subunit F6, ATP5PB/subunit b, ATP5PD/subunit d, ATP5PO/subunit OSCP. ATP synthase complex consists of a soluble F(1) head domain (subunits alpha(3) and beta(3)) - the catalytic core - and a membrane F(0) domain - the membrane proton channel (subunits c, a, 8, e, f, g, k and j). These two domains are linked by a central stalk (subunits gamma, delta, and epsilon) rotating inside the F1 region and a stationary peripheral stalk (subunits F6, b, d, and OSCP). In terms of processing, acetylation at Lys-162 decreases ATP production. Deacetylated by SIRT3. Post-translationally, in response to mitochondrial stress, the precursor protein is ubiquitinated by the SIFI complex in the cytoplasm before mitochondrial import, leading to its degradation. Within the SIFI complex, UBR4 initiates ubiquitin chain that are further elongated or branched by KCMF1.

Its subcellular location is the mitochondrion. It localises to the mitochondrion inner membrane. Its function is as follows. Subunit OSCP, of the mitochondrial membrane ATP synthase complex (F(1)F(0) ATP synthase or Complex V) that produces ATP from ADP in the presence of a proton gradient across the membrane which is generated by electron transport complexes of the respiratory chain. ATP synthase complex consist of a soluble F(1) head domain - the catalytic core - and a membrane F(1) domain - the membrane proton channel. These two domains are linked by a central stalk rotating inside the F(1) region and a stationary peripheral stalk. During catalysis, ATP synthesis in the catalytic domain of F(1) is coupled via a rotary mechanism of the central stalk subunits to proton translocation. In vivo, can only synthesize ATP although its ATP hydrolase activity can be activated artificially in vitro. Part of the complex F(0) domain. Part of the complex F(0) domain and the peripheric stalk, which acts as a stator to hold the catalytic alpha(3)beta(3) subcomplex and subunit a/ATP6 static relative to the rotary elements. This Callithrix jacchus (White-tufted-ear marmoset) protein is ATP synthase peripheral stalk subunit OSCP, mitochondrial.